A 353-amino-acid polypeptide reads, in one-letter code: MKFALTGGGTGGHLSIAKALAIELEKQGIEAIYLGSTYGQDKEWFENSPLFSERYFFNTQGVVNKSFFKKIRSLFLQAKAAFKAKEILKKHQITHTISVGGFSAGPASFASLLNKIPLYIHEQNAIKGSLNRYLSPKAKAVFSSYAFKDKGNHVLTSYPVQNAFFDHARTRTEIKHILFLGGSQGAKAINEFALLNAPKLTKQGIKITHICGPNSYEQVRFFYQELGLLDKIELFAFHNNITEVMHRADLCVSRAGASSVWELCANGLPTIFIPYPFASNNHQYYNVLEFEKENLCYVVPQNELLPKKLFEVIRKLNQKDDQGNKNLTTISAKLQQKIAKDGAKTIIETILSA.

UDP-N-acetyl-alpha-D-glucosamine-binding positions include 10 to 12 (TGG), Asn-124, Ser-183, and Gln-283.

It belongs to the glycosyltransferase 28 family. MurG subfamily.

The protein resides in the cell inner membrane. It catalyses the reaction di-trans,octa-cis-undecaprenyl diphospho-N-acetyl-alpha-D-muramoyl-L-alanyl-D-glutamyl-meso-2,6-diaminopimeloyl-D-alanyl-D-alanine + UDP-N-acetyl-alpha-D-glucosamine = di-trans,octa-cis-undecaprenyl diphospho-[N-acetyl-alpha-D-glucosaminyl-(1-&gt;4)]-N-acetyl-alpha-D-muramoyl-L-alanyl-D-glutamyl-meso-2,6-diaminopimeloyl-D-alanyl-D-alanine + UDP + H(+). It functions in the pathway cell wall biogenesis; peptidoglycan biosynthesis. In terms of biological role, cell wall formation. Catalyzes the transfer of a GlcNAc subunit on undecaprenyl-pyrophosphoryl-MurNAc-pentapeptide (lipid intermediate I) to form undecaprenyl-pyrophosphoryl-MurNAc-(pentapeptide)GlcNAc (lipid intermediate II). This is UDP-N-acetylglucosamine--N-acetylmuramyl-(pentapeptide) pyrophosphoryl-undecaprenol N-acetylglucosamine transferase from Helicobacter pylori (strain J99 / ATCC 700824) (Campylobacter pylori J99).